An 832-amino-acid chain; its full sequence is Translation initiation factor IF-2 (832 aa).

A disordered region spans residues 1–244 (MSDTDGKKTL…KAMGGSQERE (244 aa)). Residues 18 to 27 (TGQVKQSFSH) show a composition bias toward polar residues. Residues 81-141 (KANESEEAER…EARKKAEADA (61 aa)) show a composition bias toward basic and acidic residues. Over residues 142 to 171 (SSKPAAARSKADDPATMDPAAAQAAEARGA) the composition is skewed to low complexity. 2 stretches are compositionally biased toward basic and acidic residues: residues 178–201 (PRKERTADRAQPRKEQKGKGDDRR) and 227–244 (RKQERERRKAMGGSQERE). Positions 329–497 (PRPPVITVMG…SIALQAEILE (169 aa)) constitute a tr-type G domain. Positions 338 to 345 (GHVDHGKT) are G1. 338-345 (GHVDHGKT) is a GTP binding site. Residues 363–367 (GITQH) are G2. Residues 385–388 (DTPG) are G3. Residues 385 to 389 (DTPGH) and 439 to 442 (NKID) each bind GTP. The segment at 439–442 (NKID) is G4. Residues 475–477 (SAI) form a G5 region.

It belongs to the TRAFAC class translation factor GTPase superfamily. Classic translation factor GTPase family. IF-2 subfamily.

It localises to the cytoplasm. One of the essential components for the initiation of protein synthesis. Protects formylmethionyl-tRNA from spontaneous hydrolysis and promotes its binding to the 30S ribosomal subunits. Also involved in the hydrolysis of GTP during the formation of the 70S ribosomal complex. This is Translation initiation factor IF-2 from Dinoroseobacter shibae (strain DSM 16493 / NCIMB 14021 / DFL 12).